Reading from the N-terminus, the 269-residue chain is Putative hydro-lyase RL2444 (269 aa).

This sequence belongs to the D-glutamate cyclase family.

In Rhizobium johnstonii (strain DSM 114642 / LMG 32736 / 3841) (Rhizobium leguminosarum bv. viciae), this protein is Putative hydro-lyase RL2444.